The following is a 66-amino-acid chain: Cold shock protein CspB (66 aa).

Residues G4–V63 form the CSD domain.

Homodimer.

The protein resides in the cytoplasm. Its function is as follows. Affects cell viability at low temperatures. This is Cold shock protein CspB (cspB) from Geobacillus stearothermophilus (Bacillus stearothermophilus).